The primary structure comprises 376 residues: Succinyl-diaminopimelate desuccinylase (376 aa).

His-67 provides a ligand contact to Zn(2+). Asp-69 is an active-site residue. Asp-100 contributes to the Zn(2+) binding site. The active-site Proton acceptor is Glu-134. Zn(2+) is bound by residues Glu-135, Glu-163, and His-349.

Belongs to the peptidase M20A family. DapE subfamily. In terms of assembly, homodimer. Requires Zn(2+) as cofactor. The cofactor is Co(2+).

The enzyme catalyses N-succinyl-(2S,6S)-2,6-diaminopimelate + H2O = (2S,6S)-2,6-diaminopimelate + succinate. It participates in amino-acid biosynthesis; L-lysine biosynthesis via DAP pathway; LL-2,6-diaminopimelate from (S)-tetrahydrodipicolinate (succinylase route): step 3/3. Its function is as follows. Catalyzes the hydrolysis of N-succinyl-L,L-diaminopimelic acid (SDAP), forming succinate and LL-2,6-diaminopimelate (DAP), an intermediate involved in the bacterial biosynthesis of lysine and meso-diaminopimelic acid, an essential component of bacterial cell walls. The sequence is that of Succinyl-diaminopimelate desuccinylase from Haemophilus ducreyi (strain 35000HP / ATCC 700724).